We begin with the raw amino-acid sequence, 471 residues long: ATP synthase subunit beta (471 aa).

153 to 160 contributes to the ATP binding site; sequence GGAGVGKT.

Belongs to the ATPase alpha/beta chains family. In terms of assembly, F-type ATPases have 2 components, CF(1) - the catalytic core - and CF(0) - the membrane proton channel. CF(1) has five subunits: alpha(3), beta(3), gamma(1), delta(1), epsilon(1). CF(0) has four main subunits: a(1), b(1), b'(1) and c(9-12).

It localises to the cell inner membrane. The catalysed reaction is ATP + H2O + 4 H(+)(in) = ADP + phosphate + 5 H(+)(out). Functionally, produces ATP from ADP in the presence of a proton gradient across the membrane. The catalytic sites are hosted primarily by the beta subunits. In Methylibium petroleiphilum (strain ATCC BAA-1232 / LMG 22953 / PM1), this protein is ATP synthase subunit beta.